An 884-amino-acid chain; its full sequence is Formin-like protein 11 (884 aa).

A signal peptide spans 1-18 (MVYFRQIFLMIIVVSLHC). The segment at 89-143 (AESASFSPWPAPSPSPFPNGGPIESPAYPPAPPRPIPPHLRRPLPQRTHPLEQPE) is disordered. Pro residues-rich tracts occupy residues 97 to 107 (WPAPSPSPFPN) and 115 to 126 (AYPPAPPRPIPP). A helical membrane pass occupies residues 158–178 (ILVPVVASTASAIGFVVCVVG). Disordered stretches follow at residues 307–384 (SSDD…FSNK), 416–469 (SFPI…APLP), and 512–532 (MQSSTKNEEGKSKTPSPGKHL). Over residues 329–343 (SNASSASGSVNVGSS) the composition is skewed to low complexity. The segment covering 346-358 (FSEHKLDIPECSR) has biased composition (basic and acidic residues). Pro residues-rich tracts occupy residues 367-379 (APPPPPPPPPPLP) and 425-436 (QPRPPPPPPPPQ). The region spanning 461 to 884 (LGKDGAPLPK…NSPSPLAPFR (424 aa)) is the FH2 domain.

This sequence belongs to the formin-like family. Class-I subfamily.

It is found in the membrane. Might be involved in the organization and polarity of the actin cytoskeleton. In Arabidopsis thaliana (Mouse-ear cress), this protein is Formin-like protein 11 (FH11).